A 178-amino-acid chain; its full sequence is Large ribosomal subunit protein uL6 (178 aa).

It belongs to the universal ribosomal protein uL6 family. As to quaternary structure, part of the 50S ribosomal subunit.

In terms of biological role, this protein binds to the 23S rRNA, and is important in its secondary structure. It is located near the subunit interface in the base of the L7/L12 stalk, and near the tRNA binding site of the peptidyltransferase center. This chain is Large ribosomal subunit protein uL6, found in Exiguobacterium sibiricum (strain DSM 17290 / CCUG 55495 / CIP 109462 / JCM 13490 / 255-15).